The primary structure comprises 664 residues: UvrABC system protein B (664 aa).

A Helicase ATP-binding domain is found at 23-180 (EGLNRGMRFQ…EKLAKIGYQR (158 aa)). 36 to 43 (GVTGSGKT) provides a ligand contact to ATP. The Beta-hairpin signature appears at 89–112 (YYDYYQPEAYIPTKDLYIEKNADI). Positions 426 to 588 (QVDDLINEIV…ITPRSIVKPL (163 aa)) constitute a Helicase C-terminal domain. In terms of domain architecture, UVR spans 622-657 (EEYVALLEEEMYRAASELRYEDAAALRDELFRVKET).

The protein belongs to the UvrB family. In terms of assembly, forms a heterotetramer with UvrA during the search for lesions. Interacts with UvrC in an incision complex.

Its subcellular location is the cytoplasm. Its function is as follows. The UvrABC repair system catalyzes the recognition and processing of DNA lesions. A damage recognition complex composed of 2 UvrA and 2 UvrB subunits scans DNA for abnormalities. Upon binding of the UvrA(2)B(2) complex to a putative damaged site, the DNA wraps around one UvrB monomer. DNA wrap is dependent on ATP binding by UvrB and probably causes local melting of the DNA helix, facilitating insertion of UvrB beta-hairpin between the DNA strands. Then UvrB probes one DNA strand for the presence of a lesion. If a lesion is found the UvrA subunits dissociate and the UvrB-DNA preincision complex is formed. This complex is subsequently bound by UvrC and the second UvrB is released. If no lesion is found, the DNA wraps around the other UvrB subunit that will check the other stand for damage. The sequence is that of UvrABC system protein B from Thermotoga neapolitana (strain ATCC 49049 / DSM 4359 / NBRC 107923 / NS-E).